The sequence spans 196 residues: Beta-crystallin A4 (196 aa).

Thr2 bears the N-acetylthreonine mark. Residues 2–11 (TLQCTKSAGP) are N-terminal arm. Beta/gamma crystallin 'Greek key' domains lie at 12–51 (WKMV…KVLS) and 52–98 (GAWV…RPAA). Residues 99–104 (CANHRD) are connecting peptide. 2 Beta/gamma crystallin 'Greek key' domains span residues 105–146 (SRLT…HVHS) and 147–195 (GAWV…RRIQ).

It belongs to the beta/gamma-crystallin family. Homo/heterodimer, or complexes of higher-order. The structure of beta-crystallin oligomers seems to be stabilized through interactions between the N-terminal arms.

Its function is as follows. Crystallins are the dominant structural components of the vertebrate eye lens. This is Beta-crystallin A4 (CRYBA4) from Homo sapiens (Human).